Consider the following 1297-residue polypeptide: Phosphoribosylformylglycinamidine synthase (1297 aa).

The disordered stretch occupies residues 305-324 (FPGAATGSGGEIRDEGATGR). 307–318 (GAATGSGGEIRD) provides a ligand contact to ATP. 4 residues coordinate Mg(2+): Asp-679, Glu-718, Asn-722, and Asp-886. Residue Ser-888 participates in ATP binding. Residues 1044–1297 (IAVLREQGVN…LFRNARVFFK (254 aa)) enclose the Glutamine amidotransferase type-1 domain. The Nucleophile role is filled by Cys-1137. Residues His-1262 and Glu-1264 contribute to the active site.

This sequence in the N-terminal section; belongs to the FGAMS family. As to quaternary structure, monomer.

Its subcellular location is the cytoplasm. It catalyses the reaction N(2)-formyl-N(1)-(5-phospho-beta-D-ribosyl)glycinamide + L-glutamine + ATP + H2O = 2-formamido-N(1)-(5-O-phospho-beta-D-ribosyl)acetamidine + L-glutamate + ADP + phosphate + H(+). It participates in purine metabolism; IMP biosynthesis via de novo pathway; 5-amino-1-(5-phospho-D-ribosyl)imidazole from N(2)-formyl-N(1)-(5-phospho-D-ribosyl)glycinamide: step 1/2. Its function is as follows. Phosphoribosylformylglycinamidine synthase involved in the purines biosynthetic pathway. Catalyzes the ATP-dependent conversion of formylglycinamide ribonucleotide (FGAR) and glutamine to yield formylglycinamidine ribonucleotide (FGAM) and glutamate. The sequence is that of Phosphoribosylformylglycinamidine synthase from Mannheimia succiniciproducens (strain KCTC 0769BP / MBEL55E).